Reading from the N-terminus, the 272-residue chain is MHIYKEQEAEPSTGLMMPEPAPVASPGSGGSGGSGSVGAEKIGSRGKIEIKRIENTTNRQVTFCKRRSGLLKKAYELSVLCDAEVALVVFSSRGRLYEYSNNSVKETIERYKKANSDTSNASTVAEINAQHYQQEAAKLKQQITNLQNSNRTLVGDNITTMNHRELKQLEGRLDKGLGKIRARKNELLCAEIEYMQRRETELQNDNMYLKSKVAESERGLQTVNMMGSASTSEYVQNMIHYDPRNFLQFNIMHQPQYYPEQEDRKAFMSDER.

Residues 1-41 form a disordered region; it reads MHIYKEQEAEPSTGLMMPEPAPVASPGSGGSGGSGSVGAEK. The segment covering 27–36 has biased composition (gly residues); sequence GSGGSGGSGS. Residues 43–103 enclose the MADS-box domain; it reads GSRGKIEIKR…GRLYEYSNNS (61 aa). The 91-residue stretch at 129–219 folds into the K-box domain; the sequence is AQHYQQEAAK…KSKVAESERG (91 aa).

As to expression, expressed in the lodicule, stamen carpel and ovule primordia.

It localises to the nucleus. In terms of biological role, probable transcription factor involved in the development of floral organs. Acts as a C-class protein in association with MADS3. Involved in the control of lodicule number (whorl 2), stamen specification (whorl 3), floral meristem determinacy and regulation of the carpel morphogenesis (whorl 4). Plays a more predominant role in floral meristem determinacy than MADS3. This is MADS-box transcription factor 58 (MADS58) from Oryza sativa subsp. japonica (Rice).